A 459-amino-acid polypeptide reads, in one-letter code: Cysteine--tRNA ligase (459 aa).

Cys-28 contributes to the Zn(2+) binding site. Positions 30 to 40 match the 'HIGH' region motif; that stretch reads ITIYDLCHIGH. The Zn(2+) site is built by Cys-209, His-234, and Glu-238. Residues 266 to 270 carry the 'KMSKS' region motif; the sequence is KMSKS. Lys-269 is a binding site for ATP.

It belongs to the class-I aminoacyl-tRNA synthetase family. Monomer. Zn(2+) serves as cofactor.

Its subcellular location is the cytoplasm. It carries out the reaction tRNA(Cys) + L-cysteine + ATP = L-cysteinyl-tRNA(Cys) + AMP + diphosphate. The chain is Cysteine--tRNA ligase from Shewanella woodyi (strain ATCC 51908 / MS32).